Consider the following 204-residue polypeptide: Peptide chain release factor homolog (204 aa).

Positions 2–98 (ILLQLSSAQG…KNWFLGIGRF (97 aa)) are rRNA-recognition domain, N-terminus. The tract at residues 99-107 (TADEQEQSD) is linker 1. Residues 108–161 (AIRYETLRSSGPGGQHVNKTDSAVRATHLASGISVKVQSERSQHANKRLARLLI) form a GGQ domain region. Residues 120–122 (GGQ) carry the GGQ motif motif. Residues 162–179 (AWKLEQQQQENSAALKSQ) form a linker 2 region. The segment at 180 to 204 (RRMFHHQIERGNPRRTFTGMAFIEG) is rRNA-recognition domain, C-terminus.

Belongs to the prokaryotic/mitochondrial release factor family. Found in the A site of damaged 70S ribosomes, but not in undamaged ribosomes. Contacts (damaged) 16S rRNA, 23S rRNA and ribosomal protein uS12, but not mRNA.

In terms of biological role, peptide chain release-like factor that acts on 70S ribosomes with specific damage to their decoding center (cleavage of 16S rRNA between adenine-1493 and guanosine-1494, E.coli 16S rRNA numbering). Probably acts as a peptidyl-tRNA hydrolase, allowing release of the nascent chain and dissociation of the 30S and 50S subunits. Can release mRNA as short as 19 nucleotides (nt, mRNA-19, which has a single amino acid in the P-site and only a single nt in the A-site) from the ribosome. This specific cleavage is inflicted by CdiA (ECL_04451) or by colicin E3-type (ColE3) proteins. In vivo the PrfH-RtcB2 pair restores growth in the presence of ribotoxins that specifically create this damage. The sequence is that of Peptide chain release factor homolog from Escherichia coli (strain ATCC 25922 / DSM 1103 / LMG 8223 / NCIMB 12210 / NCTC 12241 / WDCM 00013 / Seattle 1946).